Here is a 128-residue protein sequence, read N- to C-terminus: uncharacterized protein (128 aa).

One can recognise a VOC domain in the interval 5–128 (SIHHIAIICS…DQLPLELYEQ (124 aa)). His8, Glu56, His77, and Glu124 together coordinate a divalent metal cation.

This is an uncharacterized protein from Bacillus subtilis (strain 168).